The primary structure comprises 428 residues: Glutamate-1-semialdehyde 2,1-aminomutase (428 aa).

K265 bears the N6-(pyridoxal phosphate)lysine mark.

The protein belongs to the class-III pyridoxal-phosphate-dependent aminotransferase family. HemL subfamily. Homodimer. Requires pyridoxal 5'-phosphate as cofactor.

Its subcellular location is the cytoplasm. It catalyses the reaction (S)-4-amino-5-oxopentanoate = 5-aminolevulinate. The protein operates within porphyrin-containing compound metabolism; protoporphyrin-IX biosynthesis; 5-aminolevulinate from L-glutamyl-tRNA(Glu): step 2/2. This Methylobacillus flagellatus (strain ATCC 51484 / DSM 6875 / VKM B-1610 / KT) protein is Glutamate-1-semialdehyde 2,1-aminomutase.